The primary structure comprises 182 residues: Dual-action ribosomal maturation protein DarP (182 aa).

The disordered stretch occupies residues M1–H25.

The protein belongs to the DarP family.

It is found in the cytoplasm. In terms of biological role, member of a network of 50S ribosomal subunit biogenesis factors which assembles along the 30S-50S interface, preventing incorrect 23S rRNA structures from forming. Promotes peptidyl transferase center (PTC) maturation. This Nitrosospira multiformis (strain ATCC 25196 / NCIMB 11849 / C 71) protein is Dual-action ribosomal maturation protein DarP.